The following is a 104-amino-acid chain: N(4)-acetylcytidine amidohydrolase (104 aa).

The ASCH domain maps to 6–101; the sequence is TFFERFEHDI…EQLYMIRFKV (96 aa). Lys-20 serves as the catalytic Proton acceptor. The active-site Nucleophile is Thr-23. The active-site Proton donor is Glu-73.

Belongs to the N(4)-acetylcytidine amidohydrolase family.

The catalysed reaction is N(4)-acetylcytidine + H2O = cytidine + acetate + H(+). It catalyses the reaction N(4)-acetyl-2'-deoxycytidine + H2O = 2'-deoxycytidine + acetate + H(+). It carries out the reaction N(4)-acetylcytosine + H2O = cytosine + acetate + H(+). Catalyzes the hydrolysis of N(4)-acetylcytidine (ac4C). The polypeptide is N(4)-acetylcytidine amidohydrolase (Shewanella oneidensis (strain ATCC 700550 / JCM 31522 / CIP 106686 / LMG 19005 / NCIMB 14063 / MR-1)).